Here is a 62-residue protein sequence, read N- to C-terminus: Large ribosomal subunit protein uL29 (62 aa).

This sequence belongs to the universal ribosomal protein uL29 family.

This is Large ribosomal subunit protein uL29 from Desulfatibacillum aliphaticivorans.